Reading from the N-terminus, the 211-residue chain is MNSLSTSAFSPVAFSLGLLLVMATAFPTPVPLGEDFKDGTTSNRPFTSPDKSEELIKYILGRISAMRKEMCEKYDKCENSKEALSENNLNLPKMTEKDGCFQSGFNQETCLMRITIGLLEFQIYLDYLQNYYEGDKGNTEAVQISTKALIQLLRQKVKQPEEVSTPNPITGSSLLNKLQTENQWMKNTKMILILRSLEDFLQFSLRAVRIM.

The signal sequence occupies residues 1–29 (MNSLSTSAFSPVAFSLGLLLVMATAFPTP). The cysteines at positions 71 and 77 are disulfide-linked. Serine 80 bears the Phosphoserine mark. Residues cysteine 100 and cysteine 110 are joined by a disulfide bond.

It belongs to the IL-6 superfamily. Component of a hexamer of two molecules each of IL6, IL6R and IL6ST; first binds to IL6R to associate with the signaling subunit IL6ST. Interacts with IL6R (via the N-terminal ectodomain); this interaction may be affected by IL6R-binding with SORL1, hence decreasing IL6 cis signaling. Interacts with SORL1 (via the N-terminal ectodomain); this interaction leads to IL6 internalization and lysosomal degradation. May form a trimeric complex with the soluble SORL1 ectodomain and soluble IL6R receptor; this interaction might stabilize circulating IL6, hence promoting IL6 trans signaling.

Its subcellular location is the secreted. Its function is as follows. Cytokine with a wide variety of biological functions in immunity, tissue regeneration, and metabolism. Binds to IL6R, then the complex associates to the signaling subunit IL6ST/gp130 to trigger the intracellular IL6-signaling pathway. The interaction with the membrane-bound IL6R and IL6ST stimulates 'classic signaling', whereas the binding of IL6 and soluble IL6R to IL6ST stimulates 'trans-signaling'. Alternatively, 'cluster signaling' occurs when membrane-bound IL6:IL6R complexes on transmitter cells activate IL6ST receptors on neighboring receiver cells. IL6 is a potent inducer of the acute phase response. Rapid production of IL6 contributes to host defense during infection and tissue injury, but excessive IL6 synthesis is involved in disease pathology. In the innate immune response, is synthesized by myeloid cells, such as macrophages and dendritic cells, upon recognition of pathogens through toll-like receptors (TLRs) at the site of infection or tissue injury. In the adaptive immune response, is required for the differentiation of B cells into immunoglobulin-secreting cells. Plays a major role in the differentiation of CD4(+) T cell subsets. Essential factor for the development of T follicular helper (Tfh) cells that are required for the induction of germinal-center formation. Required to drive naive CD4(+) T cells to the Th17 lineage. Also required for proliferation of myeloma cells and the survival of plasmablast cells. In terms of biological role, acts as an essential factor in bone homeostasis and on vessels directly or indirectly by induction of VEGF, resulting in increased angiogenesis activity and vascular permeability. Induces, through 'trans-signaling' and synergistically with IL1B and TNF, the production of VEGF. Involved in metabolic controls, is discharged into the bloodstream after muscle contraction increasing lipolysis and improving insulin resistance. 'Trans-signaling' in central nervous system also regulates energy and glucose homeostasis. Mediates, through GLP-1, crosstalk between insulin-sensitive tissues, intestinal L cells and pancreatic islets to adapt to changes in insulin demand. Also acts as a myokine. Plays a protective role during liver injury, being required for maintenance of tissue regeneration. Also has a pivotal role in iron metabolism by regulating HAMP/hepcidin expression upon inflammation or bacterial infection. Through activation of IL6ST-YAP-NOTCH pathway, induces inflammation-induced epithelial regeneration. The protein is Interleukin-6 (IL6) of Camelus bactrianus (Bactrian camel).